A 231-amino-acid polypeptide reads, in one-letter code: MSVIGLIGAMDEEVAVIKAWMTDVREQTIAGCDFFVGRFEGKDVVLLKSGIGKVNAAVSTTLLLSQFEPEYVINIGSAGGFDPELQVGDVVISDQVVHHDVDVTGFGYLMGQVPNMPATYAADETLVAEAKAALQKVTQVQAKVGLIGTGDSFMNDPVRVEAVRALFPELVAVEMEAAAVAQVCFKFGTPFVVVRSLSDIAGKESPQSFEEYLKVAAENSSLMIQQMLKGN.

Catalysis depends on Glu13, which acts as the Proton acceptor. Substrate contacts are provided by residues Gly79, Met154, and 175 to 176 (ME). Asp199 acts as the Proton donor in catalysis.

It belongs to the PNP/UDP phosphorylase family. MtnN subfamily.

It catalyses the reaction S-adenosyl-L-homocysteine + H2O = S-(5-deoxy-D-ribos-5-yl)-L-homocysteine + adenine. It carries out the reaction S-methyl-5'-thioadenosine + H2O = 5-(methylsulfanyl)-D-ribose + adenine. The enzyme catalyses 5'-deoxyadenosine + H2O = 5-deoxy-D-ribose + adenine. The protein operates within amino-acid biosynthesis; L-methionine biosynthesis via salvage pathway; S-methyl-5-thio-alpha-D-ribose 1-phosphate from S-methyl-5'-thioadenosine (hydrolase route): step 1/2. In terms of biological role, catalyzes the irreversible cleavage of the glycosidic bond in both 5'-methylthioadenosine (MTA) and S-adenosylhomocysteine (SAH/AdoHcy) to adenine and the corresponding thioribose, 5'-methylthioribose and S-ribosylhomocysteine, respectively. Also cleaves 5'-deoxyadenosine, a toxic by-product of radical S-adenosylmethionine (SAM) enzymes, into 5-deoxyribose and adenine. This is 5'-methylthioadenosine/S-adenosylhomocysteine nucleosidase from Marinomonas sp. (strain MWYL1).